The sequence spans 778 residues: Endonuclease MutS2 (778 aa).

Position 328–335 (328–335) interacts with ATP; it reads GPNTGGKT. A Smr domain is found at 702 to 777; sequence LDLRGKRYEE…GSGATIVTFK (76 aa).

Belongs to the DNA mismatch repair MutS family. MutS2 subfamily. In terms of assembly, homodimer. Binds to stalled ribosomes, contacting rRNA.

In terms of biological role, endonuclease that is involved in the suppression of homologous recombination and thus may have a key role in the control of bacterial genetic diversity. Acts as a ribosome collision sensor, splitting the ribosome into its 2 subunits. Detects stalled/collided 70S ribosomes which it binds and splits by an ATP-hydrolysis driven conformational change. Acts upstream of the ribosome quality control system (RQC), a ribosome-associated complex that mediates the extraction of incompletely synthesized nascent chains from stalled ribosomes and their subsequent degradation. Probably generates substrates for RQC. The protein is Endonuclease MutS2 of Streptococcus pneumoniae (strain JJA).